Reading from the N-terminus, the 400-residue chain is 3-phenylpropionate/cinnamic acid dioxygenase ferredoxin--NAD(+) reductase component (400 aa).

5–36 (TIIIVGGGQAAAMAAASLRQQGFTGELHLFSD) serves as a coordination point for FAD. 146 to 174 (SVVIVGAGTIGLELAASATQRRCKVTVIE) is a binding site for NAD(+).

Belongs to the bacterial ring-hydroxylating dioxygenase ferredoxin reductase family. In terms of assembly, this dioxygenase system consists of four proteins: the two subunits of the hydroxylase component (HcaE and HcaF), a ferredoxin (HcaC) and a ferredoxin reductase (HcaD). It depends on FAD as a cofactor.

The catalysed reaction is 2 reduced [2Fe-2S]-[ferredoxin] + NAD(+) + H(+) = 2 oxidized [2Fe-2S]-[ferredoxin] + NADH. Its pathway is aromatic compound metabolism; 3-phenylpropanoate degradation. Functionally, part of the multicomponent 3-phenylpropionate dioxygenase, that converts 3-phenylpropionic acid (PP) and cinnamic acid (CI) into 3-phenylpropionate-dihydrodiol (PP-dihydrodiol) and cinnamic acid-dihydrodiol (CI-dihydrodiol), respectively. The chain is 3-phenylpropionate/cinnamic acid dioxygenase ferredoxin--NAD(+) reductase component from Escherichia coli (strain 55989 / EAEC).